Reading from the N-terminus, the 738-residue chain is Conserved oligomeric Golgi complex subunit 2 (738 aa).

2 disordered regions span residues 474-504 and 668-687; these read IKKP…ETKP and KQAR…GMSD. Residues 483-500 show a composition bias toward polar residues; that stretch reads KEPSITQGNTEDQGSGPS.

Belongs to the COG2 family. Component of the conserved oligomeric Golgi complex which is composed of eight different subunits and is required for normal Golgi morphology and localization.

It is found in the golgi apparatus membrane. In terms of biological role, required for normal Golgi morphology and function. The sequence is that of Conserved oligomeric Golgi complex subunit 2 (COG2) from Homo sapiens (Human).